The chain runs to 463 residues: General transcription factor IIH subunit 4 (463 aa).

Belongs to the TFB2 family. In terms of assembly, component of the 7-subunit TFIIH core complex composed of XPB/ERCC3, XPD/ERCC2, GTF2H1, GTF2H2, GTF2H3, GTF2H4 and GTF2H5, which is active in NER. The core complex associates with the 3-subunit CDK-activating kinase (CAK) module composed of CCNH/cyclin H, CDK7 and MNAT1 to form the 10-subunit holoenzyme (holo-TFIIH) active in transcription. Part of TBP-based Pol II pre-initiation complex (PIC), in which Pol II core assembles with general transcription factors and other specific initiation factors including GTF2E1, GTF2E2, GTF2F1, GTF2F2, TCEA1, ERCC2, ERCC3, GTF2H2, GTF2H3, GTF2H4, GTF2H5, GTF2A1, GTF2A2, GTF2B and TBP; this large multi-subunit PIC complex mediates DNA unwinding and targets Pol II core to the transcription start site where the first phosphodiester bond forms.

It localises to the nucleus. Component of the general transcription and DNA repair factor IIH (TFIIH) core complex, which is involved in general and transcription-coupled nucleotide excision repair (NER) of damaged DNA and, when complexed to CAK, in RNA transcription by RNA polymerase II. In NER, TFIIH acts by opening DNA around the lesion to allow the excision of the damaged oligonucleotide and its replacement by a new DNA fragment. In transcription, TFIIH has an essential role in transcription initiation. When the pre-initiation complex (PIC) has been established, TFIIH is required for promoter opening and promoter escape. Phosphorylation of the C-terminal tail (CTD) of the largest subunit of RNA polymerase II by the kinase module CAK controls the initiation of transcription. The sequence is that of General transcription factor IIH subunit 4 (Gtf2h4) from Mus musculus (Mouse).